The chain runs to 402 residues: MDAATTRVGLTDLTFRLLRESFADAVSWVAKNLPARPAVPVLSGVLLTGSDNGLTISGFDYEVSAEAQVGAEIVSPGSVLVSGRLLSDITRALPNKPVGVHVEGNRVALTCGNARFSLPTMPVEDYPTLPTLPEETGLLPAELFAEAISQVAIAAGRDDTLPMLTGIRVEILGETVVLAATDRFRLAVRELKWSASSPDIEAAVLVPAKTLAEAAKAGIGGSDVRLSLGTGPGVGKDGLLGISGNGKRSTTRLLDAEFPKFRQLLPTEHTAVATMDVAELIEAIKLVALVADRGAQVRMEFADGSVRLSAGADDVGRAEEDLVVDYAGEPLTIAFNPTYLTDGLSSLRSERVSFGFTTAGKPALLRPVSGDDRPVAGLNGNGPFPAVSTDYVYLLMPVRLPG.

It belongs to the beta sliding clamp family. Forms a ring-shaped head-to-tail homodimer around DNA which binds and tethers DNA polymerases and other proteins to the DNA. The DNA replisome complex has a single clamp-loading complex (3 tau and 1 each of delta, delta', psi and chi subunits) which binds 3 Pol III cores (1 core on the leading strand and 2 on the lagging strand) each with a beta sliding clamp dimer. Additional proteins in the replisome are other copies of gamma, psi and chi, Ssb, DNA helicase and RNA primase.

Its subcellular location is the cytoplasm. Functionally, confers DNA tethering and processivity to DNA polymerases and other proteins. Acts as a clamp, forming a ring around DNA (a reaction catalyzed by the clamp-loading complex) which diffuses in an ATP-independent manner freely and bidirectionally along dsDNA. Initially characterized for its ability to contact the catalytic subunit of DNA polymerase III (Pol III), a complex, multichain enzyme responsible for most of the replicative synthesis in bacteria; Pol III exhibits 3'-5' exonuclease proofreading activity. The beta chain is required for initiation of replication as well as for processivity of DNA replication. This chain is Beta sliding clamp (dnaN), found in Mycobacterium bovis (strain ATCC BAA-935 / AF2122/97).